The chain runs to 201 residues: Pyridoxal 5'-phosphate synthase subunit PdxT (201 aa).

An L-glutamine-binding site is contributed by 49-51 (GES). The active-site Nucleophile is C81. Residues R110 and 139–140 (IR) contribute to the L-glutamine site. Residues H180 and E182 each act as charge relay system in the active site.

This sequence belongs to the glutaminase PdxT/SNO family. In the presence of PdxS, forms a dodecamer of heterodimers. Only shows activity in the heterodimer.

It catalyses the reaction aldehydo-D-ribose 5-phosphate + D-glyceraldehyde 3-phosphate + L-glutamine = pyridoxal 5'-phosphate + L-glutamate + phosphate + 3 H2O + H(+). The enzyme catalyses L-glutamine + H2O = L-glutamate + NH4(+). It participates in cofactor biosynthesis; pyridoxal 5'-phosphate biosynthesis. Catalyzes the hydrolysis of glutamine to glutamate and ammonia as part of the biosynthesis of pyridoxal 5'-phosphate. The resulting ammonia molecule is channeled to the active site of PdxS. The polypeptide is Pyridoxal 5'-phosphate synthase subunit PdxT (Salinispora tropica (strain ATCC BAA-916 / DSM 44818 / JCM 13857 / NBRC 105044 / CNB-440)).